Consider the following 601-residue polypeptide: Probable inactive receptor kinase At1g27190 (601 aa).

The first 24 residues, 1–24 (MKKIFITLLWLLFISSFLCSSSSA), serve as a signal peptide directing secretion. Asn-52 is a glycosylation site (N-linked (GlcNAc...) asparagine). LRR repeat units lie at residues 73-95 (RIIS…LKLC), 97-119 (SLQS…ICSW), 122-144 (YLVT…IVEC), 146-169 (FLNA…SRLD), and 170-192 (RLRR…LARF). A helical membrane pass occupies residues 221–241 (IIIVAGVLGAVGSLCVGLVIF). Thr-298 bears the Phosphothreonine mark. Positions 301–586 (FSSGNIDVSS…KNMADKHGVS (286 aa)) constitute a Protein kinase domain. Residues 307–315 (DVSSRTGVS) and Lys-329 contribute to the ATP site. Ser-383 carries the post-translational modification Phosphoserine. Thr-399 bears the Phosphothreonine mark. Tyr-476 is modified (phosphotyrosine). Ser-478 carries the phosphoserine modification. Residue Thr-479 is modified to Phosphothreonine. Phosphoserine occurs at positions 483 and 586.

The protein belongs to the protein kinase superfamily. Ser/Thr protein kinase family.

It localises to the membrane. In Arabidopsis thaliana (Mouse-ear cress), this protein is Probable inactive receptor kinase At1g27190.